The chain runs to 556 residues: Dihydroxy-acid dehydratase (556 aa).

Aspartate 81 serves as a coordination point for Mg(2+). Cysteine 122 serves as a coordination point for [2Fe-2S] cluster. Mg(2+) contacts are provided by aspartate 123 and lysine 124. At lysine 124 the chain carries N6-carboxylysine. [2Fe-2S] cluster is bound at residue cysteine 196. Glutamate 444 serves as a coordination point for Mg(2+). The active-site Proton acceptor is serine 470.

This sequence belongs to the IlvD/Edd family. In terms of assembly, homodimer. It depends on [2Fe-2S] cluster as a cofactor. Requires Mg(2+) as cofactor.

It carries out the reaction (2R)-2,3-dihydroxy-3-methylbutanoate = 3-methyl-2-oxobutanoate + H2O. The catalysed reaction is (2R,3R)-2,3-dihydroxy-3-methylpentanoate = (S)-3-methyl-2-oxopentanoate + H2O. Its pathway is amino-acid biosynthesis; L-isoleucine biosynthesis; L-isoleucine from 2-oxobutanoate: step 3/4. It functions in the pathway amino-acid biosynthesis; L-valine biosynthesis; L-valine from pyruvate: step 3/4. In terms of biological role, functions in the biosynthesis of branched-chain amino acids. Catalyzes the dehydration of (2R,3R)-2,3-dihydroxy-3-methylpentanoate (2,3-dihydroxy-3-methylvalerate) into 2-oxo-3-methylpentanoate (2-oxo-3-methylvalerate) and of (2R)-2,3-dihydroxy-3-methylbutanoate (2,3-dihydroxyisovalerate) into 2-oxo-3-methylbutanoate (2-oxoisovalerate), the penultimate precursor to L-isoleucine and L-valine, respectively. The polypeptide is Dihydroxy-acid dehydratase (Syntrophotalea carbinolica (strain DSM 2380 / NBRC 103641 / GraBd1) (Pelobacter carbinolicus)).